Reading from the N-terminus, the 282-residue chain is Shikimate dehydrogenase (NADP(+)) (282 aa).

Residues 15 to 17 and threonine 62 each bind shikimate; that span reads SKS. Lysine 66 (proton acceptor) is an active-site residue. Residues asparagine 87 and aspartate 103 each contribute to the shikimate site. NADP(+) is bound by residues 128-132, 152-157, and methionine 216; these read GAGGA and NRTPAK. Shikimate is bound at residue tyrosine 218. NADP(+) is bound at residue glycine 240.

The protein belongs to the shikimate dehydrogenase family. Homodimer.

It catalyses the reaction shikimate + NADP(+) = 3-dehydroshikimate + NADPH + H(+). It functions in the pathway metabolic intermediate biosynthesis; chorismate biosynthesis; chorismate from D-erythrose 4-phosphate and phosphoenolpyruvate: step 4/7. Functionally, involved in the biosynthesis of the chorismate, which leads to the biosynthesis of aromatic amino acids. Catalyzes the reversible NADPH linked reduction of 3-dehydroshikimate (DHSA) to yield shikimate (SA). In Nitrosococcus oceani (strain ATCC 19707 / BCRC 17464 / JCM 30415 / NCIMB 11848 / C-107), this protein is Shikimate dehydrogenase (NADP(+)).